Here is a 3010-residue protein sequence, read N- to C-terminus: Genome polyprotein (3010 aa).

Serine 2 is subject to N-acetylserine; by host. The tract at residues 2-23 (STNPKPQRKTKRNTNRRPQDVK) is interaction with STAT1. Residues 2 to 58 (STNPKPQRKTKRNTNRRPQDVKFPGGGQIVGGVYLLPRRGPRLGVRATRKTSERSQP) form an interaction with EIF2AK2/PKR region. Residues 2–59 (STNPKPQRKTKRNTNRRPQDVKFPGGGQIVGGVYLLPRRGPRLGVRATRKTSERSQPR) are interaction with DDX3X. Residues 2 to 75 (STNPKPQRKT…PKARRPEGRT (74 aa)) are disordered. Residues 2-168 (STNPKPQRKT…EDGVNYATGN (167 aa)) lie on the Cytoplasmic side of the membrane. 2 short sequence motifs (nuclear localization signal) span residues 5-13 (PKPQRKTKR) and 38-43 (PRRGPR). The span at 7 to 16 (PQRKTKRNTN) shows a compositional bias: basic residues. Residues 32-47 (GGVYLLPRRGPRLGVR) show a composition bias toward low complexity. Residue serine 53 is modified to Phosphoserine; by host. Short sequence motifs (nuclear localization signal) lie at residues 58–64 (PRGRRQP) and 66–71 (PKARRP). Over residues 58–68 (PRGRRQPIPKA) the composition is skewed to basic residues. Serine 99 is modified (phosphoserine; by host). Residues 112 to 152 (PRRRSRNLGKVIDTLTCGFADLMGYIPLVGAPLGGAARALA) are important for endoplasmic reticulum and mitochondrial localization. Serine 116 is subject to Phosphoserine; by host PKA. The tract at residues 122 to 173 (VIDTLTCGFADLMGYIPLVGAPLGGAARALAHGVRVLEDGVNYATGNLPGCS) is interaction with APOA2. The tract at residues 164-167 (YATG) is important for lipid droplets localization. The chain crosses the membrane as a helical span at residues 169–189 (LPGCSFSIFLLALLSCLTIPA). A propeptide spans 178 to 191 (LLALLSCLTIPASA) (ER anchor for the core protein, removed in mature form by host signal peptidase). The Lumenal segment spans residues 190 to 358 (SAYEVRNVSG…AGAHWGVLAG (169 aa)). 3 N-linked (GlcNAc...) asparagine; by host glycosylation sites follow: asparagine 196, asparagine 209, and asparagine 234. An important for fusion region spans residues 265-296 (LVGAAALCSAMYVGDLCGSVFLVSQLFTFSPR). N-linked (GlcNAc...) asparagine; by host glycosylation is present at asparagine 305. Residues 359–379 (LAYYSMVGNWAKVLIVMLLFA) traverse the membrane as a helical segment. The Lumenal portion of the chain corresponds to 380 to 725 (GVDGHTHVTG…WEYILLLFLL (346 aa)). Residues threonine 385 and threonine 396 are each glycosylated (O-linked (Hex...) threonine; by host). The tract at residues 385–411 (THVTGGRVASSTQSLVSWLSQGPSQKI) is HVR1. 2 O-linked (Hex...) serine; by host glycosylation sites follow: serine 401 and serine 404. Asparagine 417, asparagine 423, asparagine 430, and asparagine 448 each carry an N-linked (GlcNAc...) (high mannose) asparagine; by host glycan. Cystine bridges form between cysteine 429/cysteine 552, cysteine 452/cysteine 459, cysteine 486/cysteine 494, and cysteine 503/cysteine 508. An O-linked (Hex...) threonine; by host glycan is attached at threonine 473. Residues 474-482 (HDMPESSDQ) form an HVR2 region. Residues 480-493 (SDQRPYCWHYAPRP) are CD81-binding 1. O-linked (Hex...) threonine; by host glycosylation is present at threonine 518. Asparagine 532 carries an N-linked (GlcNAc...) (high mannose) asparagine; by host glycan. The tract at residues 544–551 (PPQGNWFG) is CD81-binding 2. N-linked (GlcNAc...) (high mannose) asparagine; by host glycosylation occurs at asparagine 556. An intrachain disulfide couples cysteine 564 to cysteine 569. An N-linked (GlcNAc...) (high mannose) asparagine; by host glycan is attached at asparagine 576. Disulfide bonds link cysteine 581-cysteine 585, cysteine 597-cysteine 620, and cysteine 607-cysteine 644. 2 N-linked (GlcNAc...) (high mannose) asparagine; by host glycosylation sites follow: asparagine 623 and asparagine 645. Residues cysteine 652 and cysteine 677 are joined by a disulfide bond. The interval 660 to 671 (SELSPLLLSTTE) is EIF2AK2/eIF2-alpha phosphorylation homology domain (PePHD). Residues 726-746 (LADARVCACLWMMLLIAQAEA) form a helical membrane-spanning segment. Residues 747-757 (TLENLVVLNAA) are Lumenal-facing. A helical membrane pass occupies residues 758 to 778 (SVAGAHGLLSFLVFFCAAWYI). At 779–781 (KGR) the chain is on the cytoplasmic side. A helical membrane pass occupies residues 782 to 803 (LVPGAAYALYGVWPLLLLLLAL). Over 804-813 (PPRAYAMDRE) the chain is Lumenal. A helical transmembrane segment spans residues 814–834 (MAASCGGAVFVGLVLLTLSPY). Residues 835–838 (YKVF) are Cytoplasmic-facing. The chain crosses the membrane as a helical span at residues 839-859 (LARLIWWLQYFITRAEAHLQV). Topologically, residues 860-881 (WVPPLNVRGGRDAIILLTCAVH) are lumenal. The chain crosses the membrane as a helical span at residues 882–902 (PELIFDITKLLLAILGPLMVL). One can recognise a Peptidase C18 domain in the interval 903–1026 (QAGITRVPYF…SFGEQGWRLL (124 aa)). The Cytoplasmic segment spans residues 903 to 1657 (QAGITRVPYF…CMSADLEVVT (755 aa)). The protease NS2-3 stretch occupies residues 904–1206 (AGITRVPYFV…PVESMETTMR (303 aa)). A lipid anchor (S-palmitoyl cysteine; by host) is attached at cysteine 922. Positions 929 to 949 (AGGHYVQMAFMKLAALTGTYV) are interaction with host SCPS1. Catalysis depends on for protease NS2 activity; shared with dimeric partner residues histidine 952, glutamate 972, and cysteine 993. The 182-residue stretch at 1027-1208 (APITAYSQQT…ESMETTMRSP (182 aa)) folds into the Peptidase S29 domain. Catalysis depends on charge relay system; for serine protease NS3 activity residues histidine 1083 and aspartate 1107. The Zn(2+) site is built by cysteine 1123 and cysteine 1125. Serine 1165 acts as the Charge relay system; for serine protease NS3 activity in catalysis. Residues cysteine 1171 and histidine 1175 each contribute to the Zn(2+) site. A Helicase ATP-binding domain is found at 1217 to 1369 (PAVPQTFQVA…PNIEEVALSN (153 aa)). 1230-1237 (APTGSGKS) contributes to the ATP binding site. Serine 1237 and glutamate 1317 together coordinate Mg(2+). The DECH box motif lies at 1316–1319 (DECH). The interval 1486-1497 (QRRGRTGRGRSG) is RNA-binding. The chain crosses the membrane as a helical span at residues 1658–1678 (STWVLVGGVLAALAAYCLTTG). The NS3-binding stretch occupies residues 1679 to 1690 (SVVIVGRIILSG). Topologically, residues 1679-1805 (SVVIVGRIIL…SITSPLTTQN (127 aa)) are cytoplasmic. The helical transmembrane segment at 1806–1826 (TLLFNILGGWVAAQLAPPSAA) threads the bilayer. Residues 1827–1828 (SA) lie on the Lumenal side of the membrane. The helical transmembrane segment at 1829–1849 (FVGAGIAGAAVGSIGLGKVLV) threads the bilayer. The tract at residues 1833-1861 (GIAGAAVGSIGLGKVLVDILAGYGAGVAG) is glycine zipper. Position 1850 (aspartate 1850) is a topological domain, cytoplasmic. Residues 1851 to 1871 (ILAGYGAGVAGALVAFKVMSG) traverse the membrane as a helical segment. The Lumenal segment spans residues 1872–1881 (EMPSTEDLVN). A helical membrane pass occupies residues 1882 to 1902 (LLPAILSPGALVVGVVCAAIL). Over 1903–1972 (RRHVGPGEGA…WINEDCSTPC (70 aa)) the chain is Cytoplasmic. Residues cysteine 1968 and cysteine 1972 are each lipidated (S-palmitoyl cysteine; by host). Residues 1973-2002 (SGSWLKDVWDWICTVLSDFKTWLQSKLLPR) lie within the membrane without spanning it. A membrane-binding region spans residues 1978-1998 (KDVWDWICTVLSDFKTWLQSK). At 2003–2989 (LPGLPFLSCQ…YHSLSRARPR (987 aa)) the chain is on the cytoplasmic side. Residues 2005–2221 (GLPFLSCQRG…KATCTTHHDS (217 aa)) are RNA-binding. Zn(2+)-binding residues include cysteine 2011, cysteine 2029, cysteine 2031, and cysteine 2052. An FKBP8-binding region spans residues 2120 to 2208 (EFFTEVDGVR…ASSSASQLSA (89 aa)). Residues 2120 to 2332 (EFFTEVDGVR…PIPPPRRKRT (213 aa)) are transcriptional activation. Residues 2135–2139 (PVCKP) form an interaction with non-structural protein 4A region. Residues 2187–2219 (KRRLARGSPPSLASSSASQLSAPSLKATCTTHH) form a disordered region. An interaction with host SKP2 region spans residues 2189–2441 (RLARGSPPSL…PCAAEESKLP (253 aa)). Serine 2194 is subject to Phosphoserine; by host; in p56. A compositionally biased stretch (low complexity) spans 2194–2211 (SPPSLASSSASQLSAPSL). Residues serine 2197, serine 2201, serine 2204, serine 2207, and serine 2210 each carry the phosphoserine; by host; in p58 modification. ISDR stretches follow at residues 2206–2245 (LSAP…TRVE) and 2210–2249 (SLKA…SENK). Positions 2210–2275 (SLKATCTTHH…REISVPAEIL (66 aa)) are EIF2AK2/PKR-binding. Residues 2249–2306 (KVVILDSFDPIRAVEDEREISVPAEILRKPRKFPPALPIWARPDYNPPLLESWKDPDY) form an NS4B-binding region. Positions 2322-2325 (PPIP) match the SH3-binding motif. The Nuclear localization signal motif lies at 2326 to 2334 (PPRRKRTVV). The tract at residues 2332 to 2441 (TVVLTESTVS…PCAAEESKLP (110 aa)) is interaction with host IFI27. Lysine 2350 is covalently cross-linked (Glycyl lysine isopeptide (Lys-Gly) (interchain with G-Cter in ubiquitin)). A compositionally biased stretch (polar residues) spans 2351-2365 (TFGSSGSSAVDSGTA). The disordered stretch occupies residues 2351-2408 (TFGSSGSSAVDSGTATGPPDQASDDGDKGSDVESYSSMPPLEGEPGDPDLSDGSWSTV). Positions 2354–2377 (SSGSSAVDSGTATGPPDQASDDGD) are V3. Phosphoserine; by host occurs at positions 2448 and 2461. The RdRp catalytic domain occupies 2633–2751 (PMGFSYDTRC…ICESAGTQED (119 aa)). Mg(2+) is bound by residues aspartate 2639, aspartate 2737, and aspartate 2738. The chain crosses the membrane as a helical span at residues 2990 to 3010 (WFMLCLLLLSVGVGIYLLPNR).

Belongs to the hepacivirus polyprotein family. In terms of assembly, homooligomer. Interacts with E1 (via C-terminus). Interacts with the non-structural protein 5A. Interacts (via N-terminus) with host STAT1 (via SH2 domain); this interaction results in decreased STAT1 phosphorylation and ubiquitin-mediated proteasome-dependent STAT1 degradation, leading to decreased IFN-stimulated gene transcription. Interacts with host STAT3; this interaction constitutively activates STAT3. Interacts with host LTBR receptor. Interacts with host TNFRSF1A receptor and possibly induces apoptosis. Interacts with host HNRPK. Interacts with host YWHAE. Interacts with host UBE3A/E6AP. Interacts with host DDX3X. Interacts with host APOA2. Interacts with host RXRA protein. Interacts with host SP110 isoform 3/Sp110b; this interaction sequesters the transcriptional corepressor SP110 away from the nucleus. Interacts with host CREB3 nuclear transcription protein; this interaction triggers cell transformation. Interacts with host ACY3. Interacts with host C1QR1. Interacts with host RBM24; this interaction, which enhances the interaction of the mature core protein with 5'-UTR, may inhibit viral translation and favor replication. Interacts with host EIF2AK2/PKR; this interaction induces the autophosphorylation of EIF2AK2. Part of the viral assembly initiation complex composed of NS2, E1, E2, NS3, NS4A, NS5A and the mature core protein. As to quaternary structure, forms a heterodimer with envelope glycoprotein E2. Interacts with mature core protein. Interacts with protease NS2. The heterodimer E1/E2 interacts with host CLDN1; this interaction plays a role in viral entry into host cell. Interacts with host SPSB2 (via C-terminus). Part of the viral assembly initiation complex composed of NS2, E1, E2, NS3, NS4A, NS5A and the mature core protein. Interacts with host NEURL3; this interaction prevents E1 binding to glycoprotein E2. Forms a heterodimer with envelope glycoprotein E1. Interacts with host CD81 and SCARB1 receptors; these interactions play a role in viral entry into host cell. Interacts with host EIF2AK2/PKR; this interaction inhibits EIF2AK2 and probably allows the virus to evade the innate immune response. Interacts with host CD209/DC-SIGN and CLEC4M/DC-SIGNR. Interact with host SPCS1; this interaction is essential for viral particle assembly. Interacts with protease NS2. The heterodimer E1/E2 interacts with host CLDN1; this interaction plays a role in viral entry into host cell. Part of the viral assembly initiation complex composed of NS2, E1, E2, NS3, NS4A, NS5A and the mature core protein. Interacts with host SLC3A2/4F2hc; the interaction may facilitate viral entry into host cell. Interacts with human PLSCR1. In terms of assembly, homohexamer. Homoheptamer. Interacts with protease NS2. As to quaternary structure, homodimer. Interacts with host SPCS1; this interaction is essential for viral particle assembly. Interacts with envelope glycoprotein E1. Interacts with envelope glycoprotein E2. Interacts with viroporin p7. Interacts with serine protease/helicase NS3. Part of the replication complex composed of NS2, NS3, NS4A, NS4B, NS5A and the RNA-directed RNA polymerase embedded in an ER-derived membranous web. Part of the viral assembly initiation complex composed of NS2, E1, E2, NS3, NS4A, NS5A and the mature core protein. Interacts with protease NS2. Interacts with non-structural protein 4A; this interaction stabilizes the folding of NS3 serine protease. NS3-NS4A interaction is essential for NS3 activation and allows membrane anchorage of the latter. NS3/NS4A complex also prevents phosphorylation of host IRF3, thus preventing the establishment of dsRNA induced antiviral state. Interacts with host MAVS; this interaction leads to the cleavage and inhibition of host MAVS. Interacts with host TICAM1; this interaction leads to the cleavage and inhibition of host TICAM1. Interacts with host TANK-binding kinase/TBK1; this interaction results in the inhibition of the association between TBK1 and IRF3, which leads to the inhibition of IRF3 activation. Interacts with host RBM24. Part of the replication complex composed of NS2, NS3, NS4A, NS4B, NS5A and the RNA-directed RNA polymerase embedded in an ER-derived membranous web. Part of the viral assembly initiation complex composed of NS2, E1, E2, NS3, NS4A, NS5A and the mature core protein. In terms of assembly, interacts with NS3 serine protease; this interaction stabilizes the folding of NS3 serine protease. NS3-NS4A interaction is essential for NS3 activation and allows membrane anchorage of the latter. Interacts with non-structural protein 5A (via N-terminus). Part of the replication complex composed of NS2, NS3, NS4A, NS4B, NS5A and the RNA-directed RNA polymerase embedded in an ER-derived membranous web. Part of the viral assembly initiation complex composed of NS2, E1, E2, NS3, NS4A, NS5A and the mature core protein. As to quaternary structure, homomultimer. Interacts with non-structural protein NS5A. Interacts with host PLA2G4C; this interaction likely initiates the recruitment of replication complexes to lipid droplets. Interacts with host STING; this interaction disrupts the interaction between STING and TBK1 thereby suppressing the interferon signaling. Part of the replication complex composed of NS2, NS3, NS4A, NS4B, NS5A and the RNA-directed RNA polymerase embedded in an ER-derived membranous web. Monomer. Homodimer; dimerization is required for RNA-binding. Interacts with the mature core protein. Interacts (via N-terminus) with non-structural protein 4A. Interacts with non-structural protein 4B. Interacts with RNA-directed RNA polymerase. Part of the viral assembly initiation complex composed of NS2, E1, E2, NS3, NS4A, NS5A and the mature core protein. Part of the replication complex composed of NS2, NS3, NS4A, NS4B, NS5A and the RNA-directed RNA polymerase. Interacts with host GRB2. Interacts with host BIN1. Interacts with host PIK3R1. Interacts with host SRCAP. Interacts with host FKBP8. Interacts with host VAPB. Interacts with host EIF2AK2/PKR; this interaction leads to disruption of EIF2AK2 dimerization by NS5A and probably allows the virus to evade the innate immune response. Interacts (via N-terminus) with host PACSIN2 (via N-terminus); this interaction attenuates protein kinase C alpha-mediated phosphorylation of PACSIN2 by disrupting the interaction between PACSIN2 and PRKCA. Interacts (via N-terminus) with host SRC kinase (via SH2 domain). Interacts with most Src-family kinases. Interacts with host IFI27 and SKP2; promotes the ubiquitin-mediated proteasomal degradation of NS5A. Interacts with host GPS2. Interacts with host TNFRSF21; this interaction allows the modulation by the virus of JNK, p38 MAPK, STAT3, and Akt signaling pathways in a DR6-dependent manner. Interacts (via N-terminus) with host CIDEB (via N-terminus); this interaction seems to regulate the association of HCV particles with APOE. Interacts with host CHKA/Choline Kinase-alpha; CHKA bridges host PI4KA and NS5A and potentiates NS5A-stimulated PI4KA activity, which then facilitates the targeting of the ternary complex to the ER for viral replication. Interacts with host SPSB2 (via C-terminus); this interaction targets NS5A for ubiquitination and degradation. Interacts with host RAB18; this interaction may promote the association of NS5A and other replicase components with lipid droplets. Interacts (via region D2) with host PPIA/CYPA; the interaction stimulates RNA-binding ability of NS5A and is dependent on the peptidyl-prolyl cis-trans isomerase activity of PPIA/CYPA. Interacts with host TRIM14; this interaction induces the degradation of NS5A. In terms of assembly, homooligomer. Interacts with non-structural protein 5A. Interacts with host VAPB. Interacts with host PRK2/PKN2. Interacts with host HNRNPA1 and SEPT6; these interactions facilitate the viral replication. Part of the replication complex composed of NS2, NS3, NS4A, NS4B, NS5A and the RNA-directed RNA polymerase. Zn(2+) serves as cofactor. Requires Mg(2+) as cofactor. In terms of processing, specific enzymatic cleavages in vivo yield mature proteins. The structural proteins, core, E1, E2 and p7 are produced by proteolytic processing by host signal peptidases. The core protein is synthesized as a 23 kDa precursor which is retained in the ER membrane through the hydrophobic signal peptide. Cleavage by the signal peptidase releases the 21 kDa mature core protein. The cleavage of the core protein precursor occurs between aminoacids 176 and 188 but the exact cleavage site is not known. Some degraded forms of the core protein appear as well during the course of infection. The other proteins (p7, NS2, NS3, NS4A, NS4B, NS5A and NS5B) are cleaved by the viral proteases. Autoprocessing between NS2 and NS3 is mediated by the NS2 cysteine protease catalytic domain and regulated by the NS3 N-terminal domain. Post-translationally, phosphorylated by host PKC and PKA. Ubiquitinated; mediated by UBE3A and leading to core protein subsequent proteasomal degradation. In terms of processing, highly N-glycosylated. Post-translationally, palmitoylation is required for NS2/3 autoprocessing and E2 recruitment to membranes. Palmitoylated. This modification may play a role in its polymerization or in protein-protein interactions. In terms of processing, cleaved by host caspases which are probably activated by the viral infection. Post-translationally, ubiquitinated. Ubiquitination, most probably at Lys-2350, mediated by host IFI27 and SKP2 leads to proteasomal degradation, restricting viral infection. Phosphorylated on serines in a basal form termed p56. p58 is a hyperphosphorylated form of p56. p56 and p58 coexist in the cell in roughly equivalent amounts. Hyperphosphorylation is dependent on the presence of NS4A. Host CSNK1A1/CKI-alpha or RPS6KB1 kinases may be responsible for NS5A phosphorylation. Phosphorylated NS5A is involved in viral replication. In terms of processing, tyrosine phosphorylation is essential for the interaction with host SRC. Post-translationally, the N-terminus is phosphorylated by host PRK2/PKN2.

Its subcellular location is the host endoplasmic reticulum membrane. The protein resides in the host mitochondrion membrane. It is found in the virion. The protein localises to the host cytoplasm. It localises to the host nucleus. Its subcellular location is the host lipid droplet. The protein resides in the virion membrane. It is found in the host mitochondrion. The protein localises to the host cell membrane. It localises to the host perinuclear region. The enzyme catalyses Hydrolysis of four peptide bonds in the viral precursor polyprotein, commonly with Asp or Glu in the P6 position, Cys or Thr in P1 and Ser or Ala in P1'.. It carries out the reaction a ribonucleoside 5'-triphosphate + H2O = a ribonucleoside 5'-diphosphate + phosphate + H(+). The catalysed reaction is ATP + H2O = ADP + phosphate + H(+). It catalyses the reaction RNA(n) + a ribonucleoside 5'-triphosphate = RNA(n+1) + diphosphate. Its activity is regulated as follows. Inhibited by the antiviral drug hexamethylene amiloride. Inhibition by amantadine appears to be genotype-dependent. Also inhibited by long-alkyl-chain iminosugar derivatives. Activity is up-regulated by PRK2/PKN2-mediated phosphorylation. In terms of biological role, packages viral RNA to form a viral nucleocapsid, and promotes virion budding. Participates in the viral particle production as a result of its interaction with the non-structural protein 5A. Binds RNA and may function as a RNA chaperone to induce the RNA structural rearrangements taking place during virus replication. Modulates viral translation initiation by interacting with viral IRES and 40S ribosomal subunit. Affects various cell signaling pathways, host immunity and lipid metabolism. Prevents the establishment of cellular antiviral state by blocking the interferon-alpha/beta (IFN-alpha/beta) and IFN-gamma signaling pathways and by blocking the formation of phosphorylated STAT1 and promoting ubiquitin-mediated proteasome-dependent degradation of STAT1. Activates STAT3 leading to cellular transformation. Regulates the activity of cellular genes, including c-myc and c-fos. May repress the promoter of p53, and sequester CREB3 and SP110 isoform 3/Sp110b in the cytoplasm. Represses cell cycle negative regulating factor CDKN1A, thereby interrupting an important check point of normal cell cycle regulation. Targets transcription factors involved in the regulation of inflammatory responses and in the immune response: suppresses NF-kappa-B activation, and activates AP-1. Binds to dendritic cells (DCs) via C1QR1, resulting in down-regulation of T-lymphocytes proliferation. Alters lipid metabolism by interacting with hepatocellular proteins involved in lipid accumulation and storage. Induces up-regulation of FAS promoter activity, and thereby contributes to the increased triglyceride accumulation in hepatocytes (steatosis). Forms a heterodimer with envelope glycoprotein E2, which mediates virus attachment to the host cell, virion internalization through clathrin-dependent endocytosis and fusion with host membrane. Fusion with the host cell is most likely mediated by both E1 and E2, through conformational rearrangements of the heterodimer required for fusion rather than a classical class II fusion mechanism. E1/E2 heterodimer binds host apolipoproteins such as APOB and APOE thereby forming a lipo-viro-particle (LVP). APOE associated to the LVP allows the initial virus attachment to cell surface receptors such as the heparan sulfate proteoglycans (HSPGs), syndecan-1 (SDC1), syndecan-1 (SDC2), the low-density lipoprotein receptor (LDLR) and scavenger receptor class B type I (SCARB1). The cholesterol transfer activity of SCARB1 allows E2 exposure and binding of E2 to SCARB1 and the tetraspanin CD81. E1/E2 heterodimer binding on CD81 activates the epithelial growth factor receptor (EGFR) signaling pathway. Diffusion of the complex E1-E2-EGFR-SCARB1-CD81 to the cell lateral membrane allows further interaction with Claudin 1 (CLDN1) and occludin (OCLN) to finally trigger HCV entry. Its function is as follows. Forms a heterodimer with envelope glycoprotein E1, which mediates virus attachment to the host cell, virion internalization through clathrin-dependent endocytosis and fusion with host membrane. Fusion with the host cell is most likely mediated by both E1 and E2, through conformational rearrangements of the heterodimer required for fusion rather than a classical class II fusion mechanism. The interaction between envelope glycoprotein E2 and host apolipoprotein E/APOE allows the proper assembly, maturation and infectivity of the viral particles. This interaction is probably promoted via the up-regulation of cellular autophagy by the virus. E1/E2 heterodimer binds host apolipoproteins such as APOB and APOE thereby forming a lipo-viro-particle (LVP). APOE associated to the LVP allows the initial virus attachment to cell surface receptors such as the heparan sulfate proteoglycans (HSPGs), syndecan-1 (SDC1), syndecan-1 (SDC2), the low-density lipoprotein receptor (LDLR) and scavenger receptor class B type I (SCARB1). The cholesterol transfer activity of SCARB1 allows E2 exposure and binding of E2 to SCARB1 and the tetraspanin CD81. E1/E2 heterodimer binding on CD81 activates the epithelial growth factor receptor (EGFR) signaling pathway. Diffusion of the complex E1-E2-EGFR-SCARB1-CD81 to the cell lateral membrane allows further interaction with Claudin 1 (CLDN1) and occludin (OCLN) to finally trigger HCV entry. Inhibits host EIF2AK2/PKR activation, preventing the establishment of an antiviral state. Viral ligand for CD209/DC-SIGN and CLEC4M/DC-SIGNR, which are respectively found on dendritic cells (DCs), and on liver sinusoidal endothelial cells and macrophage-like cells of lymph node sinuses. These interactions allow the capture of circulating HCV particles by these cells and subsequent facilitated transmission to permissive cells such as hepatocytes and lymphocyte subpopulations. The interaction between E2 and host amino acid transporter complex formed by SLC3A2 and SLC7A5/LAT1 may facilitate viral entry into host cell. Functionally, ion channel protein that acts as a viroporin and plays an essential role in the assembly, envelopment and secretion of viral particles. Regulates the host cell secretory pathway, which induces the intracellular retention of viral glycoproteins and favors assembly of viral particles. Creates a pore in acidic organelles and releases Ca(2+) and H(+) in the cytoplasm of infected cells, leading to a productive viral infection. High levels of cytoplasmic Ca(2+) may trigger membrane trafficking and transport of viral ER-associated proteins to viroplasms, sites of viral genome replication. This ionic imbalance induces the assembly of the inflammasome complex, which triggers the maturation of pro-IL-1beta into IL-1beta through the action of caspase-1. Targets also host mitochondria and induces mitochondrial depolarization. In addition of its role as a viroporin, acts as a lipid raft adhesion factor. In terms of biological role, cysteine protease required for the proteolytic auto-cleavage between the non-structural proteins NS2 and NS3. The N-terminus of NS3 is required for the function of NS2 protease (active region NS2-3). Promotes the initiation of viral particle assembly by mediating the interaction between structural and non-structural proteins. Displays three enzymatic activities: serine protease with a chymotrypsin-like fold, NTPase and RNA helicase. NS3 serine protease, in association with NS4A, is responsible for the cleavages of NS3-NS4A, NS4A-NS4B, NS4B-NS5A and NS5A-NS5B. The NS3/NS4A complex prevents phosphorylation of host IRF3, thus preventing the establishment of dsRNA induced antiviral state. The NS3/NS4A complex induces host amino acid transporter component SLC3A2, thus contributing to HCV propagation. NS3 RNA helicase binds to RNA and unwinds both dsDNA and dsRNA in the 3' to 5' direction, and likely resolves RNA complicated stable secondary structures in the template strand. Binds a single ATP and catalyzes the unzipping of a single base pair of dsRNA. Inhibits host antiviral proteins TBK1 and IRF3 thereby preventing the establishment of an antiviral state. Cleaves host MAVS/CARDIF thereby preventing the establishment of an antiviral state. Cleaves host TICAM1/TRIF, thereby disrupting TLR3 signaling and preventing the establishment of an antiviral state. Its function is as follows. Peptide cofactor which forms a non-covalent complex with the N-terminal of NS3 serine protease. The NS3/NS4A complex prevents phosphorylation of host IRF3, thus preventing the establishment of dsRNA induced antiviral state. The NS3/NS4A complex induces host amino acid transporter component SLC3A2, thus contributing to HCV propagation. Functionally, induces a specific membrane alteration that serves as a scaffold for the virus replication complex. This membrane alteration gives rise to the so-called ER-derived membranous web that contains the replication complex. NS4B self-interaction contributes to its function in membranous web formation. Promotes host TRIF protein degradation in a CASP8-dependent manner thereby inhibiting host TLR3-mediated interferon signaling. Disrupts the interaction between STING and TBK1 contributing to the inhibition of interferon signaling. In terms of biological role, phosphorylated protein that is indispensable for viral replication and assembly. Both hypo- and hyperphosphorylated states are required for the viral life cycle. The hyperphosphorylated form of NS5A is an inhibitor of viral replication. Involved in RNA-binding and especially in binding to the viral genome. Zinc is essential for RNA-binding. Participates in the viral particle production as a result of its interaction with the mature viral core protein. Its interaction with host VAPB may target the viral replication complex to vesicles. Down-regulates viral IRES translation initiation. Mediates interferon resistance, presumably by interacting with and inhibiting host EIF2AK2/PKR. Prevents BIN1-induced apoptosis. Acts as a transcriptional activator of some host genes important for viral replication when localized in the nucleus. Via the interaction with host PACSIN2, modulates lipid droplet formation in order to promote virion assembly. Modulates TNFRSF21/DR6 signaling pathway for viral propagation. RNA-dependent RNA polymerase that performs primer-template recognition and RNA synthesis during viral replication. Initiates RNA transcription/replication at a flavin adenine dinucleotide (FAD), resulting in a 5'- FAD cap on viral RNAs. In this way, recognition of viral 5' RNA by host pattern recognition receptors can be bypassed, thereby evading activation of antiviral pathways. The chain is Genome polyprotein from Hepatitis C virus genotype 1b (isolate Japanese) (HCV).